The following is a 234-amino-acid chain: Carboxymethylenebutenolidase 1 (234 aa).

Active-site residues include Cys-123, Asp-171, and His-201.

It belongs to the dienelactone hydrolase family. In terms of assembly, monomer.

The catalysed reaction is 2-(5-oxo-2,5-dihydrofuran-2-ylidene)acetate + H2O = 4-oxohex-2-enedioate + H(+). The protein operates within aromatic compound metabolism; 3-chlorocatechol degradation. Functionally, ring cleavage of cyclic ester dienelactone to produce maleylacetate. In Cupriavidus pinatubonensis (strain JMP 134 / LMG 1197) (Cupriavidus necator (strain JMP 134)), this protein is Carboxymethylenebutenolidase 1 (tfdEI).